A 438-amino-acid polypeptide reads, in one-letter code: Battenin (438 aa).

The tract at residues Met-1–Arg-27 is disordered. The Cytoplasmic segment spans residues Met-1–Asn-37. Ser-14 carries the phosphoserine modification. A helical transmembrane segment spans residues Ala-38 to Ala-58. Topologically, residues Ala-59–Arg-127 are lumenal. Residues Gln-67–Ser-87 are disordered. Asn-71 and Asn-85 each carry an N-linked (GlcNAc...) asparagine glycan. The chain crosses the membrane as a helical span at residues Val-128 to Val-148. Residues Gly-149–Ser-151 are Cytoplasmic-facing. A helical membrane pass occupies residues Leu-152–Leu-172. Topologically, residues Thr-173–Ser-182 are lumenal. A helical membrane pass occupies residues Trp-183–Thr-203. At Gln-204–Val-277 the chain is on the cytoplasmic side. The segment at Pro-239–Ser-261 is disordered. The short motif at Glu-242–Glu-244 is the Lysosomal targeting motif element. Positions Leu-253–Ile-254 match the Lysosomal targeting motif. Required for AP1G1, AP2A2 and AP3D1 interaction motif. The helical transmembrane segment at Phe-278–Ile-298 threads the bilayer. At Asn-299–Trp-346 the chain is on the lumenal side. Asn-310 carries an N-linked (GlcNAc...) asparagine glycan. Residues Val-347 to Phe-367 traverse the membrane as a helical segment. Residues Leu-368–Pro-438 lie on the Cytoplasmic side of the membrane. Positions Met-409–Gly-419 match the Lysosomal targeting motif motif. The residue at position 435 (Cys-435) is a Cysteine methyl ester. Residue Cys-435 is the site of S-farnesyl cysteine attachment. A propeptide spans His-436–Pro-438 (removed in mature form).

Belongs to the battenin family. In terms of assembly, homooligomer. Interacts with DCTN1, KIF3A, RAB7A and RILP. Interacts with CLN5. Interacts with KCNIP3. Highly glycosylated. In terms of processing, farnesylation is important for trafficking to lysosomes. In terms of tissue distribution, expressed throughout the brain, such as, in the cerebral cortex, hippocampus, cerebellum and several different cerebral nuclei (at protein level). In the cerebral cortex, expressed in all cortical layers. In the hippocampus, expressed in the granule cells in the dentate gyrus and the pyramidal cells of the hippocampus proper. In the cerebellum expressed in the granular and molecular layers, and in the Purkinje cell layer.

It is found in the lysosome membrane. The protein resides in the late endosome. The protein localises to the lysosome. Its subcellular location is the membrane raft. It localises to the golgi apparatus. It is found in the trans-Golgi network. The protein resides in the synapse. The protein localises to the synaptosome. Its subcellular location is the early endosome membrane. It localises to the late endosome membrane. It is found in the cytoplasmic vesicle. The protein resides in the autophagosome. In terms of biological role, mediates microtubule-dependent, anterograde transport connecting the Golgi network, endosomes, autophagosomes, lysosomes and plasma membrane, and participates in several cellular processes such as regulation of lysosomal pH, lysosome protein degradation, receptor-mediated endocytosis, autophagy, transport of proteins and lipids from the TGN, apoptosis and synaptic transmission. Facilitates the proteins transport from trans-Golgi network (TGN)-to other membrane compartments such as transport of microdomain-associated proteins to the plasma membrane, IGF2R transport to the lysosome where it regulates the CTSD release leading to regulation of CTSD maturation and thereby APP intracellular processing. Moreover regulates CTSD activity in response to osmotic stress. Also binds galactosylceramide and transports it from the trans Golgi to the rafts, which may have immediate and downstream effects on cell survival by modulating ceramide synthesis. At the plasma membrane, regulates actin-dependent events including filopodia formation, cell migration, and pinocytosis through ARF1-CDC42 pathway and also the cytoskeleton organization through interaction with MYH10 and fodrin leading to the regulation of the plasma membrane association of Na+, K+ ATPase complex. Regulates synaptic transmission in the amygdala, hippocampus, and cerebellum through regulation of synaptic vesicles density and their proximity to active zones leading to modulation of short-term plasticity and age-dependent anxious behavior, learning and memory. Regulates autophagic vacuoles (AVs) maturation by modulating the trafficking between endocytic and autophagolysosomal/lysosomal compartments, which involves vesicle fusion leading to regulation of degradation process. Also participates in cellular homeostasis of compounds such as, water, ions, amino acids, proteins and lipids in several tissue namely in brain and kidney through regulation of their transport and synthesis. This chain is Battenin, found in Mus musculus (Mouse).